The primary structure comprises 191 residues: Peptidyl-tRNA hydrolase (191 aa).

TRNA is bound at residue Y14. Residue H19 is the Proton acceptor of the active site. TRNA is bound by residues F64, N66, and N112.

This sequence belongs to the PTH family. In terms of assembly, monomer.

The protein resides in the cytoplasm. The enzyme catalyses an N-acyl-L-alpha-aminoacyl-tRNA + H2O = an N-acyl-L-amino acid + a tRNA + H(+). Functionally, hydrolyzes ribosome-free peptidyl-tRNAs (with 1 or more amino acids incorporated), which drop off the ribosome during protein synthesis, or as a result of ribosome stalling. Its function is as follows. Catalyzes the release of premature peptidyl moieties from peptidyl-tRNA molecules trapped in stalled 50S ribosomal subunits, and thus maintains levels of free tRNAs and 50S ribosomes. In Novosphingobium aromaticivorans (strain ATCC 700278 / DSM 12444 / CCUG 56034 / CIP 105152 / NBRC 16084 / F199), this protein is Peptidyl-tRNA hydrolase.